The sequence spans 312 residues: Envelope glycoprotein K (312 aa).

The N-terminal stretch at methionine 1–alanine 20 is a signal peptide. At glycine 21–alanine 91 the chain is on the extracellular side. Residues asparagine 58 and asparagine 67 are each glycosylated (N-linked (GlcNAc...) asparagine; by host). The helical transmembrane segment at tyrosine 92–valine 112 threads the bilayer. Topologically, residues tyrosine 113–proline 187 are cytoplasmic. Residues threonine 188 to phenylalanine 208 traverse the membrane as a helical segment. Residues threonine 209–arginine 227 lie on the Extracellular side of the membrane. The helical transmembrane segment at alanine 228 to proline 248 threads the bilayer. Over histidine 249–valine 280 the chain is Cytoplasmic. Residues leucine 281–phenylalanine 301 traverse the membrane as a helical segment. Residues leucine 302–glycine 312 are Extracellular-facing.

It belongs to the alphaherpesvirinae glycoprotein K family. As to quaternary structure, interacts (via UL20 interaction region) with protein UL20 homolog (via N-terminus); this interaction probably plays a role in the coordinate transport of protein UL20 homolog and gK to the trans-Golgi network (TGN), and is required for the cell surface expression of gK. In terms of processing, N-glycosylated.

The protein localises to the host cell membrane. The protein resides in the host endosome membrane. Its subcellular location is the host Golgi apparatus membrane. In terms of biological role, glycoprotein that probably modulates membrane fusion events during secondary envelopment of cytoplasmic capsids that bud into specific trans-Golgi network (TGN)-derived membranes. The chain is Envelope glycoprotein K (gK) from Sus scrofa (Pig).